Here is a 251-residue protein sequence, read N- to C-terminus: Imidazole glycerol phosphate synthase subunit HisF (251 aa).

Active-site residues include D11 and D130.

It belongs to the HisA/HisF family. As to quaternary structure, heterodimer of HisH and HisF.

The protein resides in the cytoplasm. It carries out the reaction 5-[(5-phospho-1-deoxy-D-ribulos-1-ylimino)methylamino]-1-(5-phospho-beta-D-ribosyl)imidazole-4-carboxamide + L-glutamine = D-erythro-1-(imidazol-4-yl)glycerol 3-phosphate + 5-amino-1-(5-phospho-beta-D-ribosyl)imidazole-4-carboxamide + L-glutamate + H(+). It participates in amino-acid biosynthesis; L-histidine biosynthesis; L-histidine from 5-phospho-alpha-D-ribose 1-diphosphate: step 5/9. Its function is as follows. IGPS catalyzes the conversion of PRFAR and glutamine to IGP, AICAR and glutamate. The HisF subunit catalyzes the cyclization activity that produces IGP and AICAR from PRFAR using the ammonia provided by the HisH subunit. The protein is Imidazole glycerol phosphate synthase subunit HisF of Phocaeicola vulgatus (strain ATCC 8482 / DSM 1447 / JCM 5826 / CCUG 4940 / NBRC 14291 / NCTC 11154) (Bacteroides vulgatus).